Reading from the N-terminus, the 349-residue chain is Carbamoyl phosphate synthase small chain (349 aa).

The CPSase stretch occupies residues 1 to 170 (MKAKLILENG…KYEISGEGKK (170 aa)). L-glutamine contacts are provided by S45, G218, and G220. One can recognise a Glutamine amidotransferase type-1 domain in the interval 170–349 (KVAIIDFGIK…IFDEFMKYAL (180 aa)). Residue C245 is the Nucleophile of the active site. L-glutamine contacts are provided by L246, Q249, N287, G289, and Y290. Catalysis depends on residues H327 and E329.

Belongs to the CarA family. As to quaternary structure, composed of two chains; the small (or glutamine) chain promotes the hydrolysis of glutamine to ammonia, which is used by the large (or ammonia) chain to synthesize carbamoyl phosphate. Tetramer of heterodimers (alpha,beta)4.

It carries out the reaction hydrogencarbonate + L-glutamine + 2 ATP + H2O = carbamoyl phosphate + L-glutamate + 2 ADP + phosphate + 2 H(+). The catalysed reaction is L-glutamine + H2O = L-glutamate + NH4(+). Its pathway is amino-acid biosynthesis; L-arginine biosynthesis; carbamoyl phosphate from bicarbonate: step 1/1. The protein operates within pyrimidine metabolism; UMP biosynthesis via de novo pathway; (S)-dihydroorotate from bicarbonate: step 1/3. Small subunit of the glutamine-dependent carbamoyl phosphate synthetase (CPSase). CPSase catalyzes the formation of carbamoyl phosphate from the ammonia moiety of glutamine, carbonate, and phosphate donated by ATP, constituting the first step of 2 biosynthetic pathways, one leading to arginine and/or urea and the other to pyrimidine nucleotides. The small subunit (glutamine amidotransferase) binds and cleaves glutamine to supply the large subunit with the substrate ammonia. The polypeptide is Carbamoyl phosphate synthase small chain (Clostridium perfringens (strain 13 / Type A)).